The following is a 616-amino-acid chain: Alpha terpineol synthase, chloroplastic (616 aa).

Residues 1 to 41 (MALLSVAPLQKPLTSCSPFSTTMPTLGVCTPRKVVTPSIIM) constitute a chloroplast transit peptide. Asp367, Asp371, and Asp519 together coordinate Mg(2+). Residues 367–371 (DDIYD) carry the DDXXD motif motif.

It belongs to the terpene synthase family. Tpsd subfamily. Mg(2+) is required as a cofactor. The cofactor is Mn(2+).

It localises to the plastid. The protein resides in the chloroplast. The enzyme catalyses (2E)-geranyl diphosphate + H2O = (S)-alpha-terpineol + diphosphate. It carries out the reaction (2E)-geranyl diphosphate + H2O = 1,8-cineole + diphosphate. It catalyses the reaction (2E)-geranyl diphosphate = beta-myrcene + diphosphate. The catalysed reaction is (2E)-geranyl diphosphate = (1S,5S)-sabinene + diphosphate. Its pathway is terpene metabolism; oleoresin biosynthesis. The protein operates within secondary metabolite biosynthesis; terpenoid biosynthesis. Its function is as follows. Monoterpene synthase (TPS) involved in the biosynthesis of monoterpene natural products included in conifer oleoresin secretions and volatile emissions; these compounds contribute to biotic and abiotic stress defense against herbivores and pathogens. Catalyzes the conversion of (2E)-geranyl diphosphate (GPP) to alpha-terpineol and, to a lower extent, to 1,8-cineole, myrcene and (-)-sabinene. This chain is Alpha terpineol synthase, chloroplastic, found in Pinus contorta (Shore pine).